The following is a 152-amino-acid chain: Transcriptional regulator MraZ (152 aa).

SpoVT-AbrB domains follow at residues 5 to 52 (ANAI…PLPE) and 81 to 124 (ATEG…DHSV).

This sequence belongs to the MraZ family. Forms oligomers.

The protein localises to the cytoplasm. The protein resides in the nucleoid. The polypeptide is Transcriptional regulator MraZ (Pseudoalteromonas atlantica (strain T6c / ATCC BAA-1087)).